We begin with the raw amino-acid sequence, 929 residues long: Pyruvate dehydrogenase E1 component (929 aa).

An Isoglutamyl lysine isopeptide (Lys-Gln) (interchain with Q-Cter in protein Pup) cross-link involves residue lysine 375.

In terms of assembly, homodimer. Part of the PDH complex, consisting of multiple copies of AceE (E1), DlaT (E2) and Lpd (E3). Requires Mg(2+) as cofactor. Thiamine diphosphate serves as cofactor.

It carries out the reaction N(6)-[(R)-lipoyl]-L-lysyl-[protein] + pyruvate + H(+) = N(6)-[(R)-S(8)-acetyldihydrolipoyl]-L-lysyl-[protein] + CO2. Functionally, component of the pyruvate dehydrogenase (PDH) complex, that catalyzes the overall conversion of pyruvate to acetyl-CoA and CO(2). AceE has reductase activity with pyruvate but does not react with 2-oxoglutarate. In Mycolicibacterium smegmatis (strain ATCC 700084 / mc(2)155) (Mycobacterium smegmatis), this protein is Pyruvate dehydrogenase E1 component (aceE).